The following is a 311-amino-acid chain: MNKISIIGSGFVGATTAYTLALSGIAKTIVLIDINKDKAEGDALDISHGVPFISPVELYAGDYSDVSGSDIIIITAGAAQKPGETRLDLVKRNTMIFKDIVAKLIKVNDTAIYLIVTNPVDILTYVTYKISGLPYGRVLGSGTVLDSARFRYLLSKHCNIDPRNIHGYIIGEHGDSELAAWSITNIAGIPIDNYCNLCGKACEKDFREEIFNNVVRAAYTIIEKKGATYYAVALAVRRIVEAIFRDENSILTVSSPLTGQYGVTNVALSLPSVVGRNGIVNILELPLSQEEIAAFRRSAEVIKSVIQELDI.

NAD(+) is bound by residues valine 12, aspartate 33, lysine 38, tyrosine 63, and 77–78; that span reads GA. Substrate-binding positions include glutamine 80, arginine 86, and 118-121; that span reads NPVD. NAD(+) is bound by residues 116–118 and serine 141; that span reads VTN. Position 146–149 (146–149) interacts with substrate; the sequence is DSAR. Beta-D-fructose 1,6-bisphosphate is bound by residues arginine 151 and histidine 166. Histidine 173 serves as the catalytic Proton acceptor. At tyrosine 219 the chain carries Phosphotyrosine. Threonine 228 contributes to the substrate binding site.

Belongs to the LDH/MDH superfamily. LDH family. In terms of assembly, homotetramer.

The protein localises to the cytoplasm. It catalyses the reaction (S)-lactate + NAD(+) = pyruvate + NADH + H(+). The protein operates within fermentation; pyruvate fermentation to lactate; (S)-lactate from pyruvate: step 1/1. Allosterically activated by fructose 1,6-bisphosphate (FBP). In terms of biological role, catalyzes the conversion of lactate to pyruvate. This chain is L-lactate dehydrogenase, found in Thermoanaerobacter pseudethanolicus (strain ATCC 33223 / 39E) (Clostridium thermohydrosulfuricum).